A 194-amino-acid polypeptide reads, in one-letter code: Ras-like protein rasS (194 aa).

10 to 17 serves as a coordination point for GTP; sequence GPGGVGKS. The short motif at 32 to 40 is the Effector region element; that stretch reads YDPTLEDSY. GTP-binding positions include 57–61 and 116–119; these read DTAGQ and NKCD. A disordered region spans residues 168 to 194; the sequence is RQSNQHSNSQEQNTDQPIKKKKSCNLL. Over residues 169-180 the composition is skewed to low complexity; sequence QSNQHSNSQEQN. C191 carries the cysteine methyl ester modification. C191 is lipidated: S-geranylgeranyl cysteine. Positions 192–194 are cleaved as a propeptide — removed in mature form; that stretch reads NLL.

This sequence belongs to the small GTPase superfamily. Ras family.

The protein localises to the cell membrane. The enzyme catalyses GTP + H2O = GDP + phosphate + H(+). Its function is as follows. Ras proteins bind GDP/GTP and possess intrinsic GTPase activity. In Dictyostelium discoideum (Social amoeba), this protein is Ras-like protein rasS (rasS).